Reading from the N-terminus, the 67-residue chain is Large ribosomal subunit protein bL35 (67 aa).

Belongs to the bacterial ribosomal protein bL35 family.

This Sinorhizobium fredii (strain NBRC 101917 / NGR234) protein is Large ribosomal subunit protein bL35.